The sequence spans 590 residues: Myo-inositol transporter 3 (590 aa).

Residues 1–26 (MRTTHIEDRDNNSLENKHTDHIEGVE) are compositionally biased toward basic and acidic residues. Positions 1-40 (MRTTHIEDRDNNSLENKHTDHIEGVENGKGTQEPPSPSGF) are disordered. Residues 1 to 57 (MRTTHIEDRDNNSLENKHTDHIEGVENGKGTQEPPSPSGFGGHLIDENLVHVEGEDK) lie on the Cytoplasmic side of the membrane. The helical transmembrane segment at 58–78 (VTWYLCFLISASAIAGFLFGY) threads the bilayer. At 79–105 (DTGVVGVALPLVGTDLGGNELNSSQQE) the chain is on the extracellular side. Asn-100 is a glycosylation site (N-linked (GlcNAc...) asparagine). The helical transmembrane segment at 106–126 (IITAGTTIGAIFGSAILGGWG) threads the bilayer. Residues 127 to 132 (DHLGRK) are Cytoplasmic-facing. The helical transmembrane segment at 133–153 (MAILISDVFFTVGAVIIASSY) threads the bilayer. Topologically, residues 154 to 157 (SVPQ) are extracellular. A helical transmembrane segment spans residues 158–178 (IIVGRIVLGVGVGGAAVIAPL). The Cytoplasmic portion of the chain corresponds to 179-192 (FITETAPTAVRGRC). A helical membrane pass occupies residues 193–213 (IGVNAFFIPFGQLVADSIGAG). At 214 to 222 (VQNMHGGWR) the chain is on the extracellular side. A helical transmembrane segment spans residues 223-243 (LLFALGAVPSLIQLLLFHYLP). Over 244-325 (ESPRILIVKG…AVSVLQAAGQ (82 aa)) the chain is Cytoplasmic. Residues 326–346 (LCGFNTLLYYAGTLFGLLGLS) form a helical membrane-spanning segment. Residues 347-349 (NPA) lie on the Extracellular side of the membrane. Residues 350-370 (LGGLIPAGTNAVFVLIGMSTV) form a helical membrane-spanning segment. At 371 to 376 (DKIGRR) the chain is on the cytoplasmic side. The chain crosses the membrane as a helical span at residues 377–397 (GLLLVGVPVLLLGLVWNIIGF). Over 398–420 (YYMCKPTGGFLDTSYSYDTTNVG) the chain is Extracellular. Residues 421-441 (IVIGGIVFYVAGFGLTYSHLV) form a helical membrane-spanning segment. The Cytoplasmic portion of the chain corresponds to 442-455 (WYQAEYLALEVRSM). A helical membrane pass occupies residues 456 to 476 (GSGVATTVCWIANLVVSVSYL). Topologically, residues 477-485 (SELETMTPS) are extracellular. A helical transmembrane segment spans residues 486-506 (GTYGFYLGLSVIAFVFVVFCF). Residues 507 to 590 (PETKQLSIDE…GGKRKPQVLV (84 aa)) are Cytoplasmic-facing.

Belongs to the major facilitator superfamily. Sugar transporter (TC 2.A.1.1) family.

It is found in the cell membrane. The catalysed reaction is myo-inositol(out) + H(+)(out) = myo-inositol(in) + H(+)(in). Transporter for myo-inositol. In Cryptococcus neoformans var. grubii serotype A (strain H99 / ATCC 208821 / CBS 10515 / FGSC 9487) (Filobasidiella neoformans var. grubii), this protein is Myo-inositol transporter 3.